The following is a 463-amino-acid chain: Protein translocase subunit SecY (463 aa).

Residues 1 to 20 (MGFMDFLAKMGENLPAVSKP) are Cytoplasmic-facing. The chain crosses the membrane as a helical span at residues 21–47 (KDKPTLTRKLLWTFIGLIVYLLMASIP). Topologically, residues 48-60 (LYGVTSSNSFLSN) are extracellular. Positions 61-68 (FLAQQIIF) form an intramembrane region, helical. A discontinuously helical transmembrane segment spans residues 61 to 89 (FLAQQIIFASSQGTLAQLGIGPVITSGLI). The stretch at 69-80 (ASSQGTLAQLGI) is an intramembrane region. Residues 81 to 89 (GPVITSGLI) constitute an intramembrane region (helical). Over 90 to 110 (MQILVGSKLINVDLTTQEGKS) the chain is Cytoplasmic. The chain crosses the membrane as a helical span at residues 111–134 (KFTQAEKALALIFIIVESSLFGYV). Residues 135 to 142 (FTRATSNI) are Extracellular-facing. A helical transmembrane segment spans residues 143-167 (LLPIIVVVQLIIASYIILLLDEMIQ). Residues 168–174 (KGWGLGS) are Cytoplasmic-facing. A helical transmembrane segment spans residues 175–193 (GVSLFIMAGIMKVIFWNMF). Topologically, residues 194 to 236 (GIVSVQSQNLPVGFFPLLVSYITSGRNLQEIVLNTSSTTPYQP) are extracellular. Residues 237–258 (DLIGLIATVGLTILIVYLVNTN) form a helical membrane-spanning segment. Residues 259 to 283 (IYIPVTTQRLRGIRTTVPLNFLYVS) lie on the Cytoplasmic side of the membrane. Residues 284–305 (SIPVIFVSVLGADIQLFASLAN) form a helical membrane-spanning segment. Over 306 to 341 (SISNSASGILTDIANAFFFPPQGVPHSVYALVVDPV) the chain is Extracellular. The chain crosses the membrane as a helical span at residues 342 to 361 (GAAIYAAVFIVLSIVFGMLW). Residues 362–404 (IDVAGLDPKTQAEQMIRSGIEIPGMRTNPRIIEGILSKYIYAL) lie on the Cytoplasmic side of the membrane. The chain crosses the membrane as a helical span at residues 405–423 (GFFSSLIVGLIAVVATFLG). At 424-426 (TYG) the chain is on the extracellular side. Residues 427 to 441 (TGVGLLLAITIAMQY) traverse the membrane as a helical segment. Topologically, residues 442–463 (YNLLAYERTLEMYPLLKRIVGE) are cytoplasmic.

This sequence belongs to the SecY/SEC61-alpha family. As to quaternary structure, component of the Sec protein translocase complex. Heterotrimer consisting of alpha (SecY), beta (SecG) and gamma (SecE) subunits. The heterotrimers can form oligomers, although 1 heterotrimer is thought to be able to translocate proteins. Interacts with the ribosome. May interact with SecDF, and other proteins may be involved.

The protein localises to the cell membrane. In terms of biological role, the central subunit of the protein translocation channel SecYEG. Consists of two halves formed by TMs 1-5 and 6-10. These two domains form a lateral gate at the front which open onto the bilayer between TMs 2 and 7, and are clamped together by SecE at the back. The channel is closed by both a pore ring composed of hydrophobic SecY resides and a short helix (helix 2A) on the extracellular side of the membrane which forms a plug. The plug probably moves laterally to allow the channel to open. The ring and the pore may move independently. This chain is Protein translocase subunit SecY, found in Sulfolobus acidocaldarius (strain ATCC 33909 / DSM 639 / JCM 8929 / NBRC 15157 / NCIMB 11770).